The following is a 348-amino-acid chain: D-alanine--D-alanine ligase (348 aa).

An ATP-grasp domain is found at 132–334; it reads KRILEVAGVP…YSDIIKELVV (203 aa). 162 to 217 serves as a coordination point for ATP; sequence LEKLTFPVFVKPANMGSSVGISKAENESELRSAIDLALKYDSRILIEQGVVAREIE. Mg(2+)-binding residues include D288, E301, and N303.

This sequence belongs to the D-alanine--D-alanine ligase family. The cofactor is Mg(2+). Mn(2+) is required as a cofactor.

The protein localises to the cytoplasm. The catalysed reaction is 2 D-alanine + ATP = D-alanyl-D-alanine + ADP + phosphate + H(+). Its pathway is cell wall biogenesis; peptidoglycan biosynthesis. In terms of biological role, cell wall formation. The protein is D-alanine--D-alanine ligase of Streptococcus thermophilus (strain CNRZ 1066).